The following is a 146-amino-acid chain: 3-hydroxyacyl-[acyl-carrier-protein] dehydratase FabZ (146 aa).

The active site involves His49.

Belongs to the thioester dehydratase family. FabZ subfamily.

The protein localises to the cytoplasm. The catalysed reaction is a (3R)-hydroxyacyl-[ACP] = a (2E)-enoyl-[ACP] + H2O. Its function is as follows. Involved in unsaturated fatty acids biosynthesis. Catalyzes the dehydration of short chain beta-hydroxyacyl-ACPs and long chain saturated and unsaturated beta-hydroxyacyl-ACPs. The sequence is that of 3-hydroxyacyl-[acyl-carrier-protein] dehydratase FabZ from Pseudomonas aeruginosa (strain LESB58).